A 447-amino-acid polypeptide reads, in one-letter code: MSASKIPLFKMKDLILILCLLEMSFAVPFFPQQSGTPGMASLSLETMRQLGSLQRLNTLSQYSRYGFGKSFNSLWMHGLLPPHSSLPWMRPREHETQQYEYSLPVHPPPLPSQPSLKPQQPGLKPFLQSAAATTNQATALKEALQPPIHLGHLPLQEGELPLVQQQVAPSDKPPKPELPGVDFADPQGPSLPGMDFPDPQGPSLPGLDFADPQGSTIFQIARLISHGPMPQNKQSPLYPGMLYVPFGANQLNAPARLGIMSSEEVAGGREDPMAYGAMFPGFGGMRPGFEGMPHNPAMGGDFTLEFDSPVAATKGPENEEGGAQGSPMPEANPDNLENPAFLTELEPAPHAGLLALPKDDIPGLPRSPSGKMKGLPSVTPAAADPLMTPELADVYRTYDADMTTSVDFQEEATMDTTMAPNSLQTSMPGNKAQEPEMMHDAWHFQEP.

The first 26 residues, 1-26 (MSASKIPLFKMKDLILILCLLEMSFA), serve as a signal peptide directing secretion. Hydroxyproline is present on proline 37. Serine 43 bears the Phosphoserine mark. Residue serine 112 is glycosylated (O-linked (GalNAc...) serine). Disordered stretches follow at residues 165–211 (QQVA…DFAD), 307–338 (DSPV…NLEN), and 353–383 (LLAL…PAAA). A run of 2 repeats spans residues 189–201 (PSLP…DPQG) and 202–214 (PSLP…DPQG).

Belongs to the ameloblastin family. As to expression, ameloblast-specific. Located at the Tomes processes of secretory ameloblasts and in the sheath space between rod-interrod enamel.

Its subcellular location is the secreted. It localises to the extracellular space. The protein resides in the extracellular matrix. In terms of biological role, involved in the mineralization and structural organization of enamel. The polypeptide is Ameloblastin (AMBN) (Homo sapiens (Human)).